We begin with the raw amino-acid sequence, 156 residues long: ATP synthase subunit b (156 aa).

A helical membrane pass occupies residues 5–25 (LTLIGQAIAFAIFVAFCMKFV).

This sequence belongs to the ATPase B chain family. In terms of assembly, F-type ATPases have 2 components, F(1) - the catalytic core - and F(0) - the membrane proton channel. F(1) has five subunits: alpha(3), beta(3), gamma(1), delta(1), epsilon(1). F(0) has three main subunits: a(1), b(2) and c(10-14). The alpha and beta chains form an alternating ring which encloses part of the gamma chain. F(1) is attached to F(0) by a central stalk formed by the gamma and epsilon chains, while a peripheral stalk is formed by the delta and b chains.

It localises to the cell inner membrane. F(1)F(0) ATP synthase produces ATP from ADP in the presence of a proton or sodium gradient. F-type ATPases consist of two structural domains, F(1) containing the extramembraneous catalytic core and F(0) containing the membrane proton channel, linked together by a central stalk and a peripheral stalk. During catalysis, ATP synthesis in the catalytic domain of F(1) is coupled via a rotary mechanism of the central stalk subunits to proton translocation. Functionally, component of the F(0) channel, it forms part of the peripheral stalk, linking F(1) to F(0). The polypeptide is ATP synthase subunit b (Acinetobacter baylyi (strain ATCC 33305 / BD413 / ADP1)).